We begin with the raw amino-acid sequence, 407 residues long: Bifunctional enzyme IspD/IspF (407 aa).

A 2-C-methyl-D-erythritol 4-phosphate cytidylyltransferase region spans residues 1 to 246 (MQPLAEATTI…RQDHVSFPDI (246 aa)). A 2-C-methyl-D-erythritol 2,4-cyclodiphosphate synthase region spans residues 247 to 407 (RTGNGYDVHS…TVIYPGEVPE (161 aa)). The a divalent metal cation site is built by Asp253 and His255. 4-CDP-2-C-methyl-D-erythritol 2-phosphate contacts are provided by residues 253–255 (DVH) and 279–280 (HS). An a divalent metal cation-binding site is contributed by His287. Residues 301–303 (DIG), 377–380 (TTNE), Phe384, and Arg387 each bind 4-CDP-2-C-methyl-D-erythritol 2-phosphate.

This sequence in the N-terminal section; belongs to the IspD/TarI cytidylyltransferase family. IspD subfamily. In the C-terminal section; belongs to the IspF family. A divalent metal cation serves as cofactor.

It carries out the reaction 2-C-methyl-D-erythritol 4-phosphate + CTP + H(+) = 4-CDP-2-C-methyl-D-erythritol + diphosphate. It catalyses the reaction 4-CDP-2-C-methyl-D-erythritol 2-phosphate = 2-C-methyl-D-erythritol 2,4-cyclic diphosphate + CMP. It participates in isoprenoid biosynthesis; isopentenyl diphosphate biosynthesis via DXP pathway; isopentenyl diphosphate from 1-deoxy-D-xylulose 5-phosphate: step 2/6. Its pathway is isoprenoid biosynthesis; isopentenyl diphosphate biosynthesis via DXP pathway; isopentenyl diphosphate from 1-deoxy-D-xylulose 5-phosphate: step 4/6. In terms of biological role, bifunctional enzyme that catalyzes the formation of 4-diphosphocytidyl-2-C-methyl-D-erythritol from CTP and 2-C-methyl-D-erythritol 4-phosphate (MEP) (IspD), and catalyzes the conversion of 4-diphosphocytidyl-2-C-methyl-D-erythritol 2-phosphate (CDP-ME2P) to 2-C-methyl-D-erythritol 2,4-cyclodiphosphate (ME-CPP) with a corresponding release of cytidine 5-monophosphate (CMP) (IspF). In Brucella anthropi (strain ATCC 49188 / DSM 6882 / CCUG 24695 / JCM 21032 / LMG 3331 / NBRC 15819 / NCTC 12168 / Alc 37) (Ochrobactrum anthropi), this protein is Bifunctional enzyme IspD/IspF.